Reading from the N-terminus, the 92-residue chain is Defensin alpha 4 (92 aa).

The signal sequence occupies residues 1–19 (MKTLVLLSALVLLAFQVQA). A propeptide spanning residues 20-58 (DPIQNTDEETKTEEQPGEEDQAVSISFGGQEGSALHEKS) is cleaved from the precursor. The segment at 23–42 (QNTDEETKTEEQPGEEDQAV) is disordered. 3 cysteine pairs are disulfide-bonded: C64–C89, C66–C81, and C71–C88.

The protein belongs to the alpha-defensin family. Paneth cells of the small bowel.

It localises to the secreted. The protein localises to the cytoplasmic vesicle. It is found in the secretory vesicle. Functionally, host-defense peptide that has antimicrobial activity. Exhibits activity against Gram-negative E.coli (in vitro). Probably contributes to the antimicrobial barrier function of the small bowel mucosa. The polypeptide is Defensin alpha 4 (Mus musculus (Mouse)).